The primary structure comprises 429 residues: 46 kDa membrane protein (429 aa).

The next 9 membrane-spanning stretches (helical) occupy residues 26–46 (AALT…EDVF), 51–71 (TGID…VSVL), 99–119 (LVLV…VLLI), 173–193 (FLIH…ALLP), 224–244 (LLIK…AHPV), 279–299 (TLLF…TDVV), 315–335 (LLTV…IDNI), 360–380 (ILWW…AVGA), and 407–427 (IAVT…RYLV).

Belongs to the CitM (TC 2.A.11) transporter family.

It localises to the cell membrane. The sequence is that of 46 kDa membrane protein (ag45) from Mycobacterium leprae (strain TN).